Reading from the N-terminus, the 299-residue chain is tRNA dimethylallyltransferase (299 aa).

Residue 13-20 (GPTASGKT) coordinates ATP. 15–20 (TASGKT) contacts substrate. The tract at residues 38 to 41 (DSRQ) is interaction with substrate tRNA.

This sequence belongs to the IPP transferase family. As to quaternary structure, monomer. Mg(2+) is required as a cofactor.

The catalysed reaction is adenosine(37) in tRNA + dimethylallyl diphosphate = N(6)-dimethylallyladenosine(37) in tRNA + diphosphate. In terms of biological role, catalyzes the transfer of a dimethylallyl group onto the adenine at position 37 in tRNAs that read codons beginning with uridine, leading to the formation of N6-(dimethylallyl)adenosine (i(6)A). The chain is tRNA dimethylallyltransferase from Prochlorococcus marinus (strain MIT 9313).